The following is a 156-amino-acid chain: Small ribosomal subunit protein uS7c (156 aa).

It belongs to the universal ribosomal protein uS7 family. In terms of assembly, part of the 30S ribosomal subunit.

The protein localises to the plastid. The protein resides in the cyanelle. In terms of biological role, one of the primary rRNA binding proteins, it binds directly to 16S rRNA where it nucleates assembly of the head domain of the 30S subunit. The sequence is that of Small ribosomal subunit protein uS7c (rps7) from Cyanophora paradoxa.